A 124-amino-acid chain; its full sequence is Fluoride-specific ion channel FluC (124 aa).

Helical transmembrane passes span 4–24 (LLLV…ISIF), 35–55 (FGTL…YALG), 60–80 (ISPE…TTFS), and 102–122 (VVLN…LVFS). Gly74 and Thr77 together coordinate Na(+).

Belongs to the fluoride channel Fluc/FEX (TC 1.A.43) family.

Its subcellular location is the cell inner membrane. It carries out the reaction fluoride(in) = fluoride(out). With respect to regulation, na(+) is not transported, but it plays an essential structural role and its presence is essential for fluoride channel function. Fluoride-specific ion channel. Important for reducing fluoride concentration in the cell, thus reducing its toxicity. The polypeptide is Fluoride-specific ion channel FluC (Shewanella oneidensis (strain ATCC 700550 / JCM 31522 / CIP 106686 / LMG 19005 / NCIMB 14063 / MR-1)).